An 80-amino-acid polypeptide reads, in one-letter code: Acyl carrier protein (80 aa).

The Carrier domain maps to 4-79; the sequence is EEIKDKVFDI…QAIDYIVNAK (76 aa). At serine 39 the chain carries O-(pantetheine 4'-phosphoryl)serine.

Belongs to the acyl carrier protein (ACP) family. Post-translationally, 4'-phosphopantetheine is transferred from CoA to a specific serine of apo-ACP by AcpS. This modification is essential for activity because fatty acids are bound in thioester linkage to the sulfhydryl of the prosthetic group.

It is found in the cytoplasm. It functions in the pathway lipid metabolism; fatty acid biosynthesis. Carrier of the growing fatty acid chain in fatty acid biosynthesis. This chain is Acyl carrier protein, found in Prosthecochloris aestuarii (strain DSM 271 / SK 413).